A 427-amino-acid polypeptide reads, in one-letter code: ATP-sensitive inward rectifier potassium channel 12 (427 aa).

Over methionine 1–aspartate 77 the chain is Cytoplasmic. The residue at position 75 (cysteine 75) is an S-nitrosocysteine. The helical transmembrane segment at isoleucine 78–valine 104 threads the bilayer. A 1,2-diacyl-sn-glycero-3-phospho-(1D-myo-inositol-4,5-bisphosphate) contacts are provided by arginine 79 and arginine 81. Topologically, residues isoleucine 105–glycine 129 are extracellular. A disulfide bridge links cysteine 123 with cysteine 155. Positions phenylalanine 130–tyrosine 146 form an intramembrane region, helical; Pore-forming. Residues threonine 143, isoleucine 144, glycine 145, and tyrosine 146 each coordinate K(+). Positions threonine 143–leucine 148 match the Selectivity filter motif. Residues glycine 147 to cysteine 155 lie on the Extracellular side of the membrane. The chain crosses the membrane as a helical span at residues proline 156 to lysine 183. Lysine 183 and lysine 188 together coordinate a 1,2-diacyl-sn-glycero-3-phospho-(1D-myo-inositol-4,5-bisphosphate). Residues methionine 184–isoleucine 427 lie on the Cytoplasmic side of the membrane. Residues aspartate 387–glutamine 396 are compositionally biased toward acidic residues. The tract at residues aspartate 387–isoleucine 427 is disordered. The PDZ-binding signature appears at serine 425 to isoleucine 427.

This sequence belongs to the inward rectifier-type potassium channel (TC 1.A.2.1) family. KCNJ12 subfamily. In terms of assembly, homotetramer. Forms heteromer with KCNJ4. Association, via its PDZ-recognition domain, with LIN7A, LIN7B, LIN7C, DLG1, CASK and APBA1 plays a key role in its localization and trafficking.

It localises to the membrane. The catalysed reaction is K(+)(in) = K(+)(out). Activated by phosphatidylinositol 4,5-biphosphate (PtdIns(4,5)P2). PtdIns(4,5)P2 binding to the cytoplasmic side of the channel triggers a conformation change leading to channel opening. Its function is as follows. Inward rectifying potassium channel that probably participates in controlling the resting membrane potential in electrically excitable cells. Probably participates in establishing action potential waveform and excitability of neuronal and muscle tissues. Inward rectifier potassium channels are characterized by a greater tendency to allow potassium to flow into the cell rather than out of it. Their voltage dependence is regulated by the concentration of extracellular potassium; as external potassium is raised, the voltage range of the channel opening shifts to more positive voltages. The inward rectification is mainly due to the blockage of outward current by internal magnesium. This is ATP-sensitive inward rectifier potassium channel 12 (KCNJ12) from Bos taurus (Bovine).